Consider the following 270-residue polypeptide: PspA protein (270 aa).

The interval 238–270 is disordered; that stretch reads MRGEALPAGGTTATPRPATETSGGAIAEQPYGQ. The span at 240–258 shows a compositional bias: low complexity; the sequence is GEALPAGGTTATPRPATET.

It belongs to the PspA/Vipp/IM30 family.

The protein localises to the cytoplasm. Functionally, involved in resistance to stress. Associates with and regulates lipid droplets (LDs) homeostasis under conditions of stress and may regulate non-replicating persistence (NRP). Could be involved in preservation of envelope integrity and tolerance to surface stress. This Mycobacterium tuberculosis (strain ATCC 25177 / H37Ra) protein is PspA protein.